The primary structure comprises 206 residues: Na(+)-translocating NADH-quinone reductase subunit E (206 aa).

6 helical membrane passes run 12–32 (AVFVENMALAFFLGMCTFLAV), 36–56 (ISSAIGLGIAVVVVLTITVPV), 85–105 (FLGLLSYIGVIAALVQILEMF), 118–138 (GVFLPLITVNCAILGASLFMV), 148–168 (VIYGAGAGVGWALAITALAGI), and 184–204 (LGITFITVGLMSLGFMSFSGI).

Belongs to the NqrDE/RnfAE family. As to quaternary structure, composed of six subunits; NqrA, NqrB, NqrC, NqrD, NqrE and NqrF.

The protein localises to the cell inner membrane. It catalyses the reaction a ubiquinone + n Na(+)(in) + NADH + H(+) = a ubiquinol + n Na(+)(out) + NAD(+). In terms of biological role, NQR complex catalyzes the reduction of ubiquinone-1 to ubiquinol by two successive reactions, coupled with the transport of Na(+) ions from the cytoplasm to the periplasm. NqrA to NqrE are probably involved in the second step, the conversion of ubisemiquinone to ubiquinol. The protein is Na(+)-translocating NADH-quinone reductase subunit E of Chromohalobacter salexigens (strain ATCC BAA-138 / DSM 3043 / CIP 106854 / NCIMB 13768 / 1H11).